Here is a 302-residue protein sequence, read N- to C-terminus: Sulfate adenylyltransferase subunit 2 (302 aa).

This sequence belongs to the PAPS reductase family. CysD subfamily. In terms of assembly, heterodimer composed of CysD, the smaller subunit, and CysN.

It catalyses the reaction sulfate + ATP + H(+) = adenosine 5'-phosphosulfate + diphosphate. Its pathway is sulfur metabolism; hydrogen sulfide biosynthesis; sulfite from sulfate: step 1/3. With CysN forms the ATP sulfurylase (ATPS) that catalyzes the adenylation of sulfate producing adenosine 5'-phosphosulfate (APS) and diphosphate, the first enzymatic step in sulfur assimilation pathway. APS synthesis involves the formation of a high-energy phosphoric-sulfuric acid anhydride bond driven by GTP hydrolysis by CysN coupled to ATP hydrolysis by CysD. This chain is Sulfate adenylyltransferase subunit 2, found in Bacteroides thetaiotaomicron (strain ATCC 29148 / DSM 2079 / JCM 5827 / CCUG 10774 / NCTC 10582 / VPI-5482 / E50).